The sequence spans 503 residues: ATP synthase subunit alpha (503 aa).

169–176 contributes to the ATP binding site; the sequence is GDRQTGKT.

It belongs to the ATPase alpha/beta chains family. In terms of assembly, F-type ATPases have 2 components, CF(1) - the catalytic core - and CF(0) - the membrane proton channel. CF(1) has five subunits: alpha(3), beta(3), gamma(1), delta(1), epsilon(1). CF(0) has three main subunits: a(1), b(2) and c(9-12). The alpha and beta chains form an alternating ring which encloses part of the gamma chain. CF(1) is attached to CF(0) by a central stalk formed by the gamma and epsilon chains, while a peripheral stalk is formed by the delta and b chains.

Its subcellular location is the cell membrane. It catalyses the reaction ATP + H2O + 4 H(+)(in) = ADP + phosphate + 5 H(+)(out). Its function is as follows. Produces ATP from ADP in the presence of a proton gradient across the membrane. The alpha chain is a regulatory subunit. The sequence is that of ATP synthase subunit alpha from Staphylococcus epidermidis (strain ATCC 35984 / DSM 28319 / BCRC 17069 / CCUG 31568 / BM 3577 / RP62A).